A 354-amino-acid polypeptide reads, in one-letter code: Thiamine thiazole synthase 1, chloroplastic (354 aa).

The transit peptide at 1–45 (MATAAASSLLKSSFAGSRLPAATRTTPASLVVATGPRGAGAGPIC) directs the protein to the chloroplast. Substrate contacts are provided by residues Ala100, 120-121 (EQ), Gly128, and Val193. Cys222 carries the 2,3-didehydroalanine (Cys) modification. Residues Asp224, His239, Met291, and 301–303 (RMG) each bind substrate.

It belongs to the THI4 family. In terms of assembly, homooctamer. Fe cation is required as a cofactor. During the catalytic reaction, a sulfide is transferred from Cys-222 to a reaction intermediate, generating a dehydroalanine residue. Highest expression in developing embryos and green leaves and a very low level expression seen in endosperm, roots, etiolated shoots and immature ears.

The protein resides in the plastid. Its subcellular location is the chloroplast. The catalysed reaction is [ADP-thiazole synthase]-L-cysteine + glycine + NAD(+) = [ADP-thiazole synthase]-dehydroalanine + ADP-5-ethyl-4-methylthiazole-2-carboxylate + nicotinamide + 3 H2O + 2 H(+). Involved in biosynthesis of the thiamine precursor thiazole. Catalyzes the conversion of NAD and glycine to adenosine diphosphate 5-(2-hydroxyethyl)-4-methylthiazole-2-carboxylic acid (ADT), an adenylated thiazole intermediate. The reaction includes an iron-dependent sulfide transfer from a conserved cysteine residue of the protein to a thiazole intermediate. The enzyme can only undergo a single turnover, which suggests it is a suicide enzyme. May have additional roles in adaptation to various stress conditions and in DNA damage tolerance. This chain is Thiamine thiazole synthase 1, chloroplastic, found in Zea mays (Maize).